Reading from the N-terminus, the 230-residue chain is Large ribosomal subunit protein uL1 (230 aa).

This sequence belongs to the universal ribosomal protein uL1 family. Part of the 50S ribosomal subunit.

Binds directly to 23S rRNA. The L1 stalk is quite mobile in the ribosome, and is involved in E site tRNA release. Functionally, protein L1 is also a translational repressor protein, it controls the translation of the L11 operon by binding to its mRNA. The polypeptide is Large ribosomal subunit protein uL1 (Bifidobacterium longum subsp. infantis (strain ATCC 15697 / DSM 20088 / JCM 1222 / NCTC 11817 / S12)).